Reading from the N-terminus, the 78-residue chain is Large ribosomal subunit protein bL28 (78 aa).

The disordered stretch occupies residues 1–20 (MSRVCQVTGKGPVTGNNISH).

It belongs to the bacterial ribosomal protein bL28 family.

This is Large ribosomal subunit protein bL28 from Pseudomonas fluorescens (strain ATCC BAA-477 / NRRL B-23932 / Pf-5).